Reading from the N-terminus, the 201-residue chain is MAHAEEPEDRTASTEPVVRPGSLLVSSTDLVEPAFRRTVIYVIEHNDAGSLGVVINRPSETAVHDVLPQWAPLAARPSALYVGGPVKRDAALCLATLRTGAQADGVAGLRRVHGRVVMVDLDSDPEVIAPLVEGVRIFAGYSGWTYGQLDSELQRDDWIVISALASDVVAPARVDVWAQVLRRQPLPLALLATHPIDVERN.

The protein belongs to the UPF0301 (AlgH) family.

In Rhodococcus jostii (strain RHA1), this protein is UPF0301 protein RHA1_ro03630.